Here is a 306-residue protein sequence, read N- to C-terminus: Dermonecrotic toxin LiSicTox-alphaIA2bi (306 aa).

An N-terminal signal peptide occupies residues 1–18 (MLPYIALILVCWSVLSQA). A propeptide spanning residues 19–26 (AQTDVEGR) is cleaved from the precursor. Residue histidine 38 is part of the active site. The Mg(2+) site is built by glutamate 58 and aspartate 60. The active-site Nucleophile is histidine 74. Cystine bridges form between cysteine 78–cysteine 84 and cysteine 80–cysteine 223. Residue aspartate 118 coordinates Mg(2+). N-linked (GlcNAc...) asparagine glycosylation is present at asparagine 283.

This sequence belongs to the arthropod phospholipase D family. Class II subfamily. The cofactor is Mg(2+). As to expression, expressed by the venom gland.

The protein localises to the secreted. The catalysed reaction is an N-(acyl)-sphingosylphosphocholine = an N-(acyl)-sphingosyl-1,3-cyclic phosphate + choline. It carries out the reaction an N-(acyl)-sphingosylphosphoethanolamine = an N-(acyl)-sphingosyl-1,3-cyclic phosphate + ethanolamine. It catalyses the reaction a 1-acyl-sn-glycero-3-phosphocholine = a 1-acyl-sn-glycero-2,3-cyclic phosphate + choline. The enzyme catalyses a 1-acyl-sn-glycero-3-phosphoethanolamine = a 1-acyl-sn-glycero-2,3-cyclic phosphate + ethanolamine. In terms of biological role, dermonecrotic toxins cleave the phosphodiester linkage between the phosphate and headgroup of certain phospholipids (sphingolipid and lysolipid substrates), forming an alcohol (often choline) and a cyclic phosphate. This toxin acts on sphingomyelin (SM). It may also act on ceramide phosphoethanolamine (CPE), lysophosphatidylcholine (LPC) and lysophosphatidylethanolamine (LPE), but not on lysophosphatidylserine (LPS), and lysophosphatidylglycerol (LPG). It acts by transphosphatidylation, releasing exclusively cyclic phosphate products as second products. Induces dermonecrosis, hemolysis, increased vascular permeability, edema, inflammatory response, and platelet aggregation. The protein is Dermonecrotic toxin LiSicTox-alphaIA2bi of Loxosceles intermedia (Brown spider).